A 307-amino-acid chain; its full sequence is Porphobilinogen deaminase (307 aa).

Position 241 is an S-(dipyrrolylmethanemethyl)cysteine (Cys-241).

Belongs to the HMBS family. As to quaternary structure, monomer. The cofactor is dipyrromethane.

It catalyses the reaction 4 porphobilinogen + H2O = hydroxymethylbilane + 4 NH4(+). The protein operates within porphyrin-containing compound metabolism; protoporphyrin-IX biosynthesis; coproporphyrinogen-III from 5-aminolevulinate: step 2/4. Functionally, tetrapolymerization of the monopyrrole PBG into the hydroxymethylbilane pre-uroporphyrinogen in several discrete steps. The polypeptide is Porphobilinogen deaminase (Coxiella burnetii (strain CbuK_Q154) (Coxiella burnetii (strain Q154))).